Here is a 393-residue protein sequence, read N- to C-terminus: Phosphoglycerate kinase (393 aa).

Substrate-binding positions include 22–24 (DFN), R37, 60–63 (HLGR), R119, and R152. Residues K202, G293, E324, and 350–353 (GGDS) contribute to the ATP site.

Belongs to the phosphoglycerate kinase family. In terms of assembly, monomer.

The protein resides in the cytoplasm. It carries out the reaction (2R)-3-phosphoglycerate + ATP = (2R)-3-phospho-glyceroyl phosphate + ADP. Its pathway is carbohydrate degradation; glycolysis; pyruvate from D-glyceraldehyde 3-phosphate: step 2/5. This is Phosphoglycerate kinase from Borrelia garinii subsp. bavariensis (strain ATCC BAA-2496 / DSM 23469 / PBi) (Borreliella bavariensis).